We begin with the raw amino-acid sequence, 166 residues long: Cyclic pyranopterin monophosphate synthase (166 aa).

Substrate is bound by residues 83–85 (LCH) and 121–122 (ME). D136 is a catalytic residue.

This sequence belongs to the MoaC family. In terms of assembly, homohexamer; trimer of dimers.

The catalysed reaction is (8S)-3',8-cyclo-7,8-dihydroguanosine 5'-triphosphate = cyclic pyranopterin phosphate + diphosphate. Its pathway is cofactor biosynthesis; molybdopterin biosynthesis. Catalyzes the conversion of (8S)-3',8-cyclo-7,8-dihydroguanosine 5'-triphosphate to cyclic pyranopterin monophosphate (cPMP). The sequence is that of Cyclic pyranopterin monophosphate synthase from Trichodesmium erythraeum (strain IMS101).